We begin with the raw amino-acid sequence, 708 residues long: O-antigen chain terminator bifunctional methyltransferase/kinase WbdD (708 aa).

The segment at 1–210 (MTKDLNTLVS…VPRPMYLVSN (210 aa)) is methyltransferase. Residues 16-17 (YQ), R36, G61, 82-87 (DFQQEN), 108-111 (GRIE), and L128 each bind S-adenosyl-L-methionine. The kinase stretch occupies residues 211–459 (HRVLINDFNQ…AKLPSAEQQR (249 aa)). ATP contacts are provided by residues P229, H237, 241-243 (RRY), K252, E274, 309-311 (EKL), M358, and D369. Residues 485–594 (AGSEALRGQI…EIEKIHRSRS (110 aa)) adopt a coiled-coil conformation. Residues 601-669 (YRYLGLQIHL…RLYRRMNPLP (69 aa)) are required for membrane-binding. A required for localizing WbdA to the membrane region spans residues 687–708 (VMHPELLPPEVYEIYLKLTKNK).

Belongs to the WbdD family. In terms of assembly, homotrimer in solution. Interacts with WbdA.

The protein localises to the cell inner membrane. It catalyses the reaction 3-O-phospho-alpha-D-Man-(1-&gt;2)-alpha-D-Man-(1-&gt;2)-[alpha-D-Man-(1-&gt;3)-alpha-D-Man-(1-&gt;3)-alpha-D-Man-(1-&gt;2)-alpha-D-Man-(1-&gt;2)](n)-alpha-D-Man-(1-&gt;3)-alpha-D-Man-(1-&gt;3)-alpha-D-Man-(1-&gt;3)-alpha-D-GlcNAc-di-trans,octa-cis-undecaprenyl diphosphate + S-adenosyl-L-methionine = 3-O-methylphospho-alpha-D-Man-(1-&gt;2)-alpha-D-Man-(1-&gt;2)-[alpha-D-Man-(1-&gt;3)-alpha-D-Man-(1-&gt;3)-alpha-D-Man-(1-&gt;2)-alpha-D-Man-(1-&gt;2)](n)-alpha-D-Man-(1-&gt;3)-alpha-D-Man-(1-&gt;3)-alpha-D-Man-(1-&gt;3)-alpha-D-GlcNAc-di-trans,octa-cis-undecaprenyl diphosphate + S-adenosyl-L-homocysteine. The catalysed reaction is alpha-D-Man-(1-&gt;2)-alpha-D-Man-(1-&gt;2)-[alpha-D-Man-(1-&gt;3)-alpha-D-Man-(1-&gt;3)-alpha-D-Man-(1-&gt;2)-alpha-D-Man-(1-&gt;2)](n)-alpha-D-Man-(1-&gt;3)-alpha-D-Man-(1-&gt;3)-alpha-D-Man-(1-&gt;3)-alpha-D-GlcNAc-di-trans,octa-cis-undecaprenyl diphosphate + ATP = 3-O-phospho-alpha-D-Man-(1-&gt;2)-alpha-D-Man-(1-&gt;2)-[alpha-D-Man-(1-&gt;3)-alpha-D-Man-(1-&gt;3)-alpha-D-Man-(1-&gt;2)-alpha-D-Man-(1-&gt;2)](n)-alpha-D-Man-(1-&gt;3)-alpha-D-Man-(1-&gt;3)-alpha-D-Man-(1-&gt;3)-alpha-D-GlcNAc-di-trans,octa-cis-undecaprenyl diphosphate + ADP + H(+). The protein operates within bacterial outer membrane biogenesis; LPS O-antigen biosynthesis. Regulates the length of the LPS O-antigen polysaccharide chain. Stops the polymerization of the chain by phosphorylating and then methylating the phosphate on the terminal sugar. This terminal modification is essential for export of the O-antigen across the inner membrane. WbdD is also required for correct localization of the WbdA mannosyltransferase. The protein is O-antigen chain terminator bifunctional methyltransferase/kinase WbdD of Escherichia coli.